A 115-amino-acid chain; its full sequence is MAKYSSKINKIRTFALSLVFVGFLIMYIGVFFKESIWLSTFFMLLGVLSIGLSTVVYFWIGMLSTKAVRVVCPGCEKETKVLGRVDMCMHCREPLTLDPGLEGKEFDESYNRKKS.

A run of 2 helical transmembrane segments spans residues 13-33 (TFAL…VFFK) and 41-61 (FFML…FWIG).

The protein belongs to the UPF0295 family.

It is found in the cell membrane. This is UPF0295 protein BPUM_0828 from Bacillus pumilus (strain SAFR-032).